A 113-amino-acid polypeptide reads, in one-letter code: Death-associated protein-like 1.L (113 aa).

The tract at residues 1-57 is disordered; that stretch reads MAKEQKMQSSPQALKAGHLPAVKAGGMRVSKKQGNEENSAPEKNAKKTLQEKPSSVL.

It belongs to the DAP-DAPL1 family. In terms of assembly, associates with ribosomes; preventing translation. Interacts with eiF5a (eif5a and eif5a2); preventing translation.

Ribosome-binding protein that promotes ribosome hibernation, a process during which ribosomes are stabilized in an inactive state and preserved from proteasomal degradation. Acts via its association with eiF5a (eif5a and eif5a2) at the polypeptide exit tunnel of the ribosome, preventing mRNA translation. Plays a key role in ribosome hibernation in the mature egg by preventing mRNA translation, leading to ribosome inactivation. Ribosomes, which are produced in large quantities during oogenesis, are stored and translationally repressed in the egg and early embryo. The sequence is that of Death-associated protein-like 1.L (dapl1.L) from Xenopus laevis (African clawed frog).